Here is a 223-residue protein sequence, read N- to C-terminus: Ras-related protein Rab-37 (223 aa).

The tract at residues M1–S23 is disordered. The residue at position 2 (T2) is an N-acetylthreonine. Residues T38, G39, V40, G41, K42, T43, C44, and T62 each coordinate GTP. T43 serves as a coordination point for Mg(2+). 2 short sequence motifs (switch) span residues G52–F67 and D85–D102. Mg(2+)-binding residues include T62 and D85. GTP contacts are provided by G88, N143, K144, D146, M147, S173, A174, and K175. 2 S-geranylgeranyl cysteine lipidation sites follow: C219 and C220. Position 220 is a cysteine methyl ester (C220). A propeptide spans S221–M223 (removed in mature form).

This sequence belongs to the small GTPase superfamily. Rab family. As to quaternary structure, interacts with RIMS1. Interacts (in GDP-bound form) with RPGR, RPGR functions as guanine exchange factor (GEF). Mg(2+) is required as a cofactor.

The protein localises to the cytoplasmic vesicle. Its subcellular location is the cell projection. It is found in the cilium. The enzyme catalyses GTP + H2O = GDP + phosphate + H(+). Regulated by guanine nucleotide exchange factors (GEFs) including RPGR which promote the exchange of bound GDP for free GTP. Regulated by GTPase activating proteins (GAPs) which increase the GTP hydrolysis activity. Inhibited by GDP dissociation inhibitors (GDIs). Its function is as follows. The small GTPases Rab are key regulators of intracellular membrane trafficking, from the formation of transport vesicles to their fusion with membranes. Rabs cycle between an inactive GDP-bound form and an active GTP-bound form that is able to recruit to membranes different sets of downstream effectors directly responsible for vesicle formation, movement, tethering and fusion. Acts as an organizer for autophagosome biogenesis in a GTP-dependent manner. Involved in retinal homeostasis by autophagy regulation. The sequence is that of Ras-related protein Rab-37 from Homo sapiens (Human).